Consider the following 547-residue polypeptide: Cytochrome P450 monooxygenase 81 (547 aa).

The next 2 membrane-spanning stretches (helical) occupy residues 6-23 and 106-124; these read IPTQ…LFLL and AFFA…ATAG. Residue Cys-483 participates in heme binding. Asn-503 and Asn-516 each carry an N-linked (GlcNAc...) asparagine glycan.

The protein belongs to the cytochrome P450 family. Heme serves as cofactor.

It localises to the membrane. The protein operates within secondary metabolite biosynthesis. Its function is as follows. Cytochrome P450 monooxygenase that is able to use dehydroabietic acid as a substrate for oxidation. In Postia placenta (strain ATCC 44394 / Madison 698-R) (Brown rot fungus), this protein is Cytochrome P450 monooxygenase 81.